The primary structure comprises 198 residues: Peroxiredoxin-2 (198 aa).

A2 is subject to N-acetylalanine. The 159-residue stretch at 6-164 (ARIGKPAPDF…ALRLVQAFQY (159 aa)) folds into the Thioredoxin domain. C51 serves as the catalytic Cysteine sulfenic acid (-SOH) intermediate. S112 carries the phosphoserine modification. Phosphothreonine is present on T182. At K196 the chain carries N6-acetyllysine.

This sequence belongs to the peroxiredoxin family. AhpC/Prx1 subfamily. As to quaternary structure, homodimer; disulfide-linked, upon oxidation. 5 homodimers assemble to form a ring-like decamer. Interacts with TIPIN. In terms of processing, the enzyme can be inactivated by further oxidation of the cysteine sulfenic acid (C(P)-SOH) to sulphinic acid (C(P)-SO2H) instead of its condensation to a disulfide bond. It can be reactivated by forming a transient disulfide bond with sulfiredoxin SRXN1, which reduces the cysteine sulfinic acid in an ATP- and Mg-dependent manner. Acetylation increases resistance to transition to high molecular-mass complexes. Deacetylated by HDAC6 which decreases reducing activity.

It localises to the cytoplasm. The enzyme catalyses a hydroperoxide + [thioredoxin]-dithiol = an alcohol + [thioredoxin]-disulfide + H2O. In terms of biological role, thiol-specific peroxidase that catalyzes the reduction of hydrogen peroxide and organic hydroperoxides to water and alcohols, respectively. Plays a role in cell protection against oxidative stress by detoxifying peroxides and as sensor of hydrogen peroxide-mediated signaling events. Might participate in the signaling cascades of growth factors and tumor necrosis factor-alpha by regulating the intracellular concentrations of H(2)O(2). In Macaca fascicularis (Crab-eating macaque), this protein is Peroxiredoxin-2 (PRDX2).